We begin with the raw amino-acid sequence, 68 residues long: Conotoxin Cal14.13b (68 aa).

The N-terminal stretch at 1–20 (MKLCVVIVLLMLAMPFNGGE) is a signal peptide. Residues 21–68 (ASRFFNQHARSQRSGMKTRGIWCDPPCPEGETCRGGECSDEFNGDMGR) constitute a propeptide that is removed on maturation. Methionine amide is present on Met66.

Post-translationally, contains 2 disulfide bonds. Expressed by the venom duct.

It is found in the secreted. Functionally, probable neurotoxin with unknown target. Possibly targets ion channels. The sequence is that of Conotoxin Cal14.13b from Californiconus californicus (California cone).